Here is a 115-residue protein sequence, read N- to C-terminus: Chorion protein S15 (115 aa).

A signal peptide spans M1–A18.

It belongs to the chorion protein S15/S18 family.

The protein localises to the secreted. Functionally, chorion membrane (egg shell) protein; plays a role in protecting the egg from the environment. This Drosophila melanogaster (Fruit fly) protein is Chorion protein S15 (Cp15).